An 894-amino-acid chain; its full sequence is Disease resistance protein SUMM2 (894 aa).

Residues 31 to 71 (ELSKNVVAMKKDMEVLKKKRDDVKRRVDIEEFTRRRERLSQ) adopt a coiled-coil conformation. One can recognise an NB-ARC domain in the interval 140 to 443 (TLATPIARIE…CEGFIDENES (304 aa)). 183 to 190 (GMGGVGKT) provides a ligand contact to ATP. LRR repeat units lie at residues 517–538 (SVRRMSLMENEIEILSGSPECL), 539–561 (ELTTLFLQKNDSLLHISDEFFRC), 564–586 (MLVVLDLSGNSSLRKLPNQISKL), 588–610 (SLRYLDLSWTYIKRLPVGLQELK), 611–633 (KLRYLRLDYMKRLKSISGISNIS), 634–656 (SLRKLQLLQSKMSLDMSLVEELQ), and 660–681 (HLEVLNISIKSSLVVEKLLNAP).

This sequence belongs to the disease resistance NB-LRR family. In terms of assembly, interacts with PAT1.

Negatively regulated by the MEKK1-MKK1-MKK2-MPK4 kinase cascade. In terms of biological role, disease resistance protein that mediates defense responses against the bacterial pathogen Pseudomonas syringae pv tomato strain DC3000, and the virulent oomycete Hyaloperonospora arabidopsidis isolate Noco2. Becomes active when the MEKK1-MKK1-MKK2-MPK4 kinase cascade is disrupted by the microbial effector hopAI1. Does not seem to be required for the activation of MPK4 by flg22, or flg22-induced up-regulation of PAD3. Functions downstream of MEKK2/SUMM1 in immune responses, including cell death and defense responses. The polypeptide is Disease resistance protein SUMM2 (Arabidopsis thaliana (Mouse-ear cress)).